The sequence spans 158 residues: Lysozyme C (158 aa).

Positions 1–18 (MRVLPLALLVGLLAVSDA) are cleaved as a signal peptide. In terms of domain architecture, C-type lysozyme spans 19–150 (KVLGKCEFAR…DQYMAECWSR (132 aa)). 4 disulfide bridges follow: Cys24/Cys147, Cys46/Cys135, Cys80/Cys93, and Cys89/Cys107. Residues Glu51 and Asp68 contribute to the active site.

It belongs to the glycosyl hydrolase 22 family. Monomer. As to expression, strongly expressed in gill and gonad, and marginally detectable in hemolymph and lymphoid organ. Not expressed in kidney, hepatopancreas or tail muscle.

Its subcellular location is the secreted. The catalysed reaction is Hydrolysis of (1-&gt;4)-beta-linkages between N-acetylmuramic acid and N-acetyl-D-glucosamine residues in a peptidoglycan and between N-acetyl-D-glucosamine residues in chitodextrins.. In terms of biological role, lysozymes have primarily a bacteriolytic function; those in tissues and body fluids are associated with the monocyte-macrophage system and enhance the activity of immunoagents. Has bacteriolytic activity against Gram-positive bacterium M.luteus, and Gram-negative shrimp pathogenic bacteria V.alginolyticus, V.parahaemolyticus and V.vulnificus. May play a role in host defense. The protein is Lysozyme C of Penaeus merguiensis (Banana prawn).